Reading from the N-terminus, the 334-residue chain is Adenosine deaminase (334 aa).

Zn(2+) contacts are provided by His-12 and His-14. His-14, Asp-16, and Gly-170 together coordinate substrate. Residue His-197 coordinates Zn(2+). The Proton donor role is filled by Glu-200. Residue Asp-278 participates in Zn(2+) binding. Substrate is bound at residue Asp-279.

It belongs to the metallo-dependent hydrolases superfamily. Adenosine and AMP deaminases family. Adenosine deaminase subfamily. Requires Zn(2+) as cofactor.

The catalysed reaction is adenosine + H2O + H(+) = inosine + NH4(+). The enzyme catalyses 2'-deoxyadenosine + H2O + H(+) = 2'-deoxyinosine + NH4(+). In terms of biological role, catalyzes the hydrolytic deamination of adenosine and 2-deoxyadenosine. The sequence is that of Adenosine deaminase from Yersinia pseudotuberculosis serotype O:1b (strain IP 31758).